A 312-amino-acid polypeptide reads, in one-letter code: Methionyl-tRNA formyltransferase (312 aa).

Residue 112–115 (SLLP) participates in (6S)-5,6,7,8-tetrahydrofolate binding.

Belongs to the Fmt family.

It carries out the reaction L-methionyl-tRNA(fMet) + (6R)-10-formyltetrahydrofolate = N-formyl-L-methionyl-tRNA(fMet) + (6S)-5,6,7,8-tetrahydrofolate + H(+). In terms of biological role, attaches a formyl group to the free amino group of methionyl-tRNA(fMet). The formyl group appears to play a dual role in the initiator identity of N-formylmethionyl-tRNA by promoting its recognition by IF2 and preventing the misappropriation of this tRNA by the elongation apparatus. The sequence is that of Methionyl-tRNA formyltransferase from Dehalococcoides mccartyi (strain CBDB1).